Consider the following 260-residue polypeptide: Adenosylcobinamide-GDP ribazoletransferase (260 aa).

The next 6 membrane-spanning stretches (helical) occupy residues 40–60, 64–84, 117–137, 142–162, 189–209, and 210–230; these read AFPF…LLLL, ADPL…TGAL, YGAI…AAIV, PLAA…AITW, FALV…FGLW, and PLVA…VFIR.

This sequence belongs to the CobS family. Requires Mg(2+) as cofactor.

The protein resides in the cell inner membrane. It carries out the reaction alpha-ribazole + adenosylcob(III)inamide-GDP = adenosylcob(III)alamin + GMP + H(+). The catalysed reaction is alpha-ribazole 5'-phosphate + adenosylcob(III)inamide-GDP = adenosylcob(III)alamin 5'-phosphate + GMP + H(+). It functions in the pathway cofactor biosynthesis; adenosylcobalamin biosynthesis; adenosylcobalamin from cob(II)yrinate a,c-diamide: step 7/7. In terms of biological role, joins adenosylcobinamide-GDP and alpha-ribazole to generate adenosylcobalamin (Ado-cobalamin). Also synthesizes adenosylcobalamin 5'-phosphate from adenosylcobinamide-GDP and alpha-ribazole 5'-phosphate. This chain is Adenosylcobinamide-GDP ribazoletransferase, found in Rhizobium etli (strain CIAT 652).